Here is a 136-residue protein sequence, read N- to C-terminus: Large ribosomal subunit protein uL16c (136 aa).

The protein belongs to the universal ribosomal protein uL16 family. Part of the 50S ribosomal subunit.

Its subcellular location is the plastid. The protein resides in the chloroplast. This is Large ribosomal subunit protein uL16c from Buxus microphylla (Littleleaf boxwood).